We begin with the raw amino-acid sequence, 205 residues long: Holliday junction branch migration complex subunit RuvA (205 aa).

A domain I region spans residues 1–67 (MIGWLKGDVQ…ADNLQLFGFL (67 aa)). A domain II region spans residues 68 to 146 (QLAERDLFRE…DSVASTGPER (79 aa)). A flexible linker region spans residues 147–155 (NQLDPVAPD). The tract at residues 155-205 (DLIATLETLGFETHEIRDALQRLNGMGGPQDGDDDDAWLRACIKLMSSTDP) is domain III.

Belongs to the RuvA family. In terms of assembly, homotetramer. Forms an RuvA(8)-RuvB(12)-Holliday junction (HJ) complex. HJ DNA is sandwiched between 2 RuvA tetramers; dsDNA enters through RuvA and exits via RuvB. An RuvB hexamer assembles on each DNA strand where it exits the tetramer. Each RuvB hexamer is contacted by two RuvA subunits (via domain III) on 2 adjacent RuvB subunits; this complex drives branch migration. In the full resolvosome a probable DNA-RuvA(4)-RuvB(12)-RuvC(2) complex forms which resolves the HJ.

Its subcellular location is the cytoplasm. The RuvA-RuvB-RuvC complex processes Holliday junction (HJ) DNA during genetic recombination and DNA repair, while the RuvA-RuvB complex plays an important role in the rescue of blocked DNA replication forks via replication fork reversal (RFR). RuvA specifically binds to HJ cruciform DNA, conferring on it an open structure. The RuvB hexamer acts as an ATP-dependent pump, pulling dsDNA into and through the RuvAB complex. HJ branch migration allows RuvC to scan DNA until it finds its consensus sequence, where it cleaves and resolves the cruciform DNA. In Parasynechococcus marenigrum (strain WH8102), this protein is Holliday junction branch migration complex subunit RuvA.